Consider the following 187-residue polypeptide: UPF0301 protein Sbal195_3177 (187 aa).

The protein belongs to the UPF0301 (AlgH) family.

The polypeptide is UPF0301 protein Sbal195_3177 (Shewanella baltica (strain OS195)).